A 100-amino-acid polypeptide reads, in one-letter code: Small ribosomal subunit protein uS14c (100 aa).

It belongs to the universal ribosomal protein uS14 family. In terms of assembly, part of the 30S ribosomal subunit.

It is found in the plastid. The protein resides in the chloroplast. Its function is as follows. Binds 16S rRNA, required for the assembly of 30S particles. The sequence is that of Small ribosomal subunit protein uS14c from Cucumis sativus (Cucumber).